Here is a 277-residue protein sequence, read N- to C-terminus: MPNGSANKLPHVTTRRMLDMKERGEKIAVLTAYDYTMARILDRSGVDAILVGDSASNVFSGHNTTLPITVDEMIYHAKAVVRGVQAETSRAMVIVDMPFMSYQLSPEDAVRNAGKIMKEHECDAVKMEGGKVIAEAVKRITDIGIPVMGHLGLMPQSIYKYGSYKVRAKEGDEAEQLMEDARILEESGAFAIVLEKIPSKLAGEVSRSLTIPTIGIGAGPECDGQVLVINDMLGLNTEFHPRFVRRYADLSSVIEKAVQSYVADVRANSFPSEDESY.

Mg(2+)-binding residues include aspartate 53 and aspartate 96. 3-methyl-2-oxobutanoate-binding positions include 53–54 (DS), aspartate 96, and lysine 126. Glutamate 128 contributes to the Mg(2+) binding site. Catalysis depends on glutamate 195, which acts as the Proton acceptor.

It belongs to the PanB family. In terms of assembly, homodecamer; pentamer of dimers. Mg(2+) serves as cofactor.

The protein resides in the cytoplasm. It carries out the reaction 3-methyl-2-oxobutanoate + (6R)-5,10-methylene-5,6,7,8-tetrahydrofolate + H2O = 2-dehydropantoate + (6S)-5,6,7,8-tetrahydrofolate. It functions in the pathway cofactor biosynthesis; (R)-pantothenate biosynthesis; (R)-pantoate from 3-methyl-2-oxobutanoate: step 1/2. In terms of biological role, catalyzes the reversible reaction in which hydroxymethyl group from 5,10-methylenetetrahydrofolate is transferred onto alpha-ketoisovalerate to form ketopantoate. The protein is 3-methyl-2-oxobutanoate hydroxymethyltransferase of Chlorobaculum parvum (strain DSM 263 / NCIMB 8327) (Chlorobium vibrioforme subsp. thiosulfatophilum).